A 419-amino-acid polypeptide reads, in one-letter code: S-adenosylmethionine synthase (419 aa).

H15 contacts ATP. D17 serves as a coordination point for Mg(2+). Position 43 (E43) interacts with K(+). L-methionine contacts are provided by E56 and Q100. Residues 100 to 110 (QSPDIAQGVDE) form a flexible loop region. Residues 171–173 (DGK), 248–249 (KF), D257, 263–264 (RK), A280, and K284 each bind ATP. D257 is an L-methionine binding site. K288 contacts L-methionine.

This sequence belongs to the AdoMet synthase family. In terms of assembly, homotetramer; dimer of dimers. Mg(2+) is required as a cofactor. Requires K(+) as cofactor.

It localises to the cytoplasm. It catalyses the reaction L-methionine + ATP + H2O = S-adenosyl-L-methionine + phosphate + diphosphate. It functions in the pathway amino-acid biosynthesis; S-adenosyl-L-methionine biosynthesis; S-adenosyl-L-methionine from L-methionine: step 1/1. Its function is as follows. Catalyzes the formation of S-adenosylmethionine (AdoMet) from methionine and ATP. The overall synthetic reaction is composed of two sequential steps, AdoMet formation and the subsequent tripolyphosphate hydrolysis which occurs prior to release of AdoMet from the enzyme. The polypeptide is S-adenosylmethionine synthase (Synechococcus sp. (strain CC9311)).